Reading from the N-terminus, the 103-residue chain is Small ribosomal subunit protein uS10c (103 aa).

This sequence belongs to the universal ribosomal protein uS10 family. As to quaternary structure, part of the 30S ribosomal subunit.

The protein localises to the plastid. It is found in the chloroplast. Its function is as follows. Involved in the binding of tRNA to the ribosomes. This Emiliania huxleyi (Coccolithophore) protein is Small ribosomal subunit protein uS10c.